A 551-amino-acid chain; its full sequence is Thermolysin (551 aa).

Residues 1–31 (MKRKMKMKLVRFGLAAGLAAQVFFLPYNALA) form the signal peptide. Positions 32–235 (STEHVTWNQQ…DAAKPGDVKS (204 aa)) are cleaved as a propeptide — activation peptide. The Ca(2+) site is built by Asp292, Asp294, Gln296, and Asp373. His377 is a Zn(2+) binding site. Residue Glu378 is part of the active site. 2 residues coordinate Zn(2+): His381 and Glu401. Residues Glu412, Asn418, Asp420, Glu422, Glu425, Thr429, Ile432, and Asp435 each contribute to the Ca(2+) site. Residue His466 is the Proton donor of the active site.

The protein belongs to the peptidase M4 family. Ca(2+) serves as cofactor. The cofactor is Zn(2+).

Its subcellular location is the secreted. The enzyme catalyses Preferential cleavage: Xaa-|-Leu &gt; Xaa-|-Phe.. Extracellular zinc metalloprotease. The protein is Thermolysin (nprS) of Geobacillus stearothermophilus (Bacillus stearothermophilus).